The sequence spans 309 residues: Olfactory receptor 1L8 (309 aa).

Residues 1-26 are Extracellular-facing; that stretch reads MERINHTSSVSEFILLGLSSRPEDQK. A glycan (N-linked (GlcNAc...) asparagine) is linked at asparagine 5. A helical transmembrane segment spans residues 27-50; sequence TLFVLFLIVYLVTITGNLLIILAI. The Cytoplasmic portion of the chain corresponds to 51–58; it reads RFNPHLQT. A helical membrane pass occupies residues 59–80; it reads PMYFFLSFLSLTDICFTTSVVP. Over 81 to 101 the chain is Extracellular; it reads KMLMNFLSEKKTISYAGCLTQ. Residues cysteine 98 and cysteine 190 are joined by a disulfide bond. The helical transmembrane segment at 102-121 threads the bilayer; sequence MYFLYALGNSDSCLLAVMAF. The Cytoplasmic segment spans residues 122–140; that stretch reads DRYVAVCDPFHYVTTMSHH. Residues 141–159 traverse the membrane as a helical segment; it reads HCVLLVAFSCSFPHLHSLL. The Extracellular portion of the chain corresponds to 160–197; that stretch reads HTLLLNRLTFCDSNVIHHFLCDLSPVLKLSCSSIFVNE. The helical transmembrane segment at 198–220 threads the bilayer; the sequence is IVQMTEAPIVLVTRFLCIAFSYI. Residues 221-237 lie on the Cytoplasmic side of the membrane; sequence RILTTVLKIPSTSGKRK. The helical transmembrane segment at 238–260 threads the bilayer; the sequence is AFSTCGFYLTVVTLFYGSIFCVY. Over 261 to 272 the chain is Extracellular; sequence LQPPSTYAVKDH. The chain crosses the membrane as a helical span at residues 273–292; the sequence is VATIVYTVLSSMLNPFIYSL. At 293 to 309 the chain is on the cytoplasmic side; sequence RNKDLKQGLRKLMSKRS.

Belongs to the G-protein coupled receptor 1 family.

It is found in the cell membrane. Odorant receptor. The protein is Olfactory receptor 1L8 (OR1L8) of Homo sapiens (Human).